The chain runs to 905 residues: DNA mismatch repair protein MutS (905 aa).

Residues 389 to 410 (ERPANPEGTYPTDAETSGDTLP) are disordered. Position 638-645 (638-645 (GPNMAGKS)) interacts with ATP. The tract at residues 826 to 847 (RDAARGTNSAPSRQTLPGLDLP) is disordered. Over residues 831–840 (GTNSAPSRQT) the composition is skewed to polar residues.

Belongs to the DNA mismatch repair MutS family.

This protein is involved in the repair of mismatches in DNA. It is possible that it carries out the mismatch recognition step. This protein has a weak ATPase activity. The sequence is that of DNA mismatch repair protein MutS from Nitratidesulfovibrio vulgaris (strain ATCC 29579 / DSM 644 / CCUG 34227 / NCIMB 8303 / VKM B-1760 / Hildenborough) (Desulfovibrio vulgaris).